A 480-amino-acid chain; its full sequence is CASP8 and FADD-like apoptosis regulator (480 aa).

DED domains are found at residues 1 to 73 (MSAE…RILK) and 92 to 170 (DYRV…KIQK). The segment at 1–195 (MSAEVIHQVE…LQAAIQKSLK (195 aa)) is interaction with CASP8. The segment at 1–227 (MSAEVIHQVE…GAQQEPVKKS (227 aa)) is interaction with FADD. The interaction with CASP8 propeptide stretch occupies residues 1–305 (MSAEVIHQVE…FACMPEHRDY (305 aa)). A not proteolytically processed and involved in apoptosis inhibition region spans residues 1 to 435 (MSAEVIHQVE…CLSQKLRQER (435 aa)). An interaction with CASP3 region spans residues 192–435 (KSLKDPSNNF…CLSQKLRQER (244 aa)). Positions 192-480 (KSLKDPSNNF…LRKKLILSYT (289 aa)) are interaction with TRAF1 and TRAF2. The interval 217-480 (LGAQQEPVKK…LRKKLILSYT (264 aa)) is interaction with CASP8 subunits p18 and p10. The tract at residues 263-358 (ETELLRDTFT…AGKPKMFFIQ (96 aa)) is caspase. The interaction with CASP8 stretch occupies residues 370–480 (SSLLEVDGPA…LRKKLILSYT (111 aa)).

It belongs to the peptidase C14A family. As to quaternary structure, TNFRSF6 stimulation triggers recruitment to the death-inducing signaling complex (DISC) formed by TNFRSF6, FADD and CASP8. A proteolytic fragment (p43) stays associated with the DISC. Also interacts with FADD, CASP8, CASP3, TRAF1, TRAF2 and Bcl-X(L) (in vitro). Interacts with RIPK1. In terms of assembly, (Microbial infection) Interacts with HBV protein X. In terms of processing, proteolytically processed by CASP8 generating subunit p43 and p12. In terms of tissue distribution, widely expressed. Higher expression in skeletal muscle, pancreas, heart, kidney, placenta, and peripheral blood leukocytes. Also detected in diverse cell lines. Isoform 8 is predominantly expressed in testis and skeletal muscle.

In terms of biological role, apoptosis regulator protein which may function as a crucial link between cell survival and cell death pathways in mammalian cells. Acts as an inhibitor of TNFRSF6 mediated apoptosis. A proteolytic fragment (p43) is likely retained in the death-inducing signaling complex (DISC) thereby blocking further recruitment and processing of caspase-8 at the complex. Full length and shorter isoforms have been shown either to induce apoptosis or to reduce TNFRSF-triggered apoptosis. Lacks enzymatic (caspase) activity. This Homo sapiens (Human) protein is CASP8 and FADD-like apoptosis regulator (CFLAR).